Consider the following 98-residue polypeptide: NADH-ubiquinone oxidoreductase chain 4L (98 aa).

Helical transmembrane passes span 1-21, 29-49, and 61-81; these read MPFI…GLLI, SLLC…TMTL, and IILL…LILI.

This sequence belongs to the complex I subunit 4L family. As to quaternary structure, core subunit of respiratory chain NADH dehydrogenase (Complex I) which is composed of 45 different subunits.

It localises to the mitochondrion inner membrane. It carries out the reaction a ubiquinone + NADH + 5 H(+)(in) = a ubiquinol + NAD(+) + 4 H(+)(out). Core subunit of the mitochondrial membrane respiratory chain NADH dehydrogenase (Complex I) which catalyzes electron transfer from NADH through the respiratory chain, using ubiquinone as an electron acceptor. Part of the enzyme membrane arm which is embedded in the lipid bilayer and involved in proton translocation. The protein is NADH-ubiquinone oxidoreductase chain 4L (MT-ND4L) of Cebus albifrons (White-fronted capuchin).